The following is a 1245-amino-acid chain: ATP-dependent helicase/nuclease subunit A (1245 aa).

A UvrD-like helicase ATP-binding domain is found at 4–477 (TKWTDEQLSA…IQLYKNFRSR (474 aa)). 25 to 32 (AAAGSGKT) contacts ATP. In terms of domain architecture, UvrD-like helicase C-terminal spans 517 to 815 (KFKDTIVGGP…RIMSIHKSKG (299 aa)).

It belongs to the helicase family. AddA subfamily. Heterodimer of AddA and AddB/RexB. The cofactor is Mg(2+).

It catalyses the reaction Couples ATP hydrolysis with the unwinding of duplex DNA by translocating in the 3'-5' direction.. The catalysed reaction is ATP + H2O = ADP + phosphate + H(+). The heterodimer acts as both an ATP-dependent DNA helicase and an ATP-dependent, dual-direction single-stranded exonuclease. Recognizes the chi site generating a DNA molecule suitable for the initiation of homologous recombination. The AddA nuclease domain is required for chi fragment generation; this subunit has the helicase and 3' -&gt; 5' nuclease activities. This Clostridium beijerinckii (strain ATCC 51743 / NCIMB 8052) (Clostridium acetobutylicum) protein is ATP-dependent helicase/nuclease subunit A.